The chain runs to 230 residues: 5'-methylthioadenosine/S-adenosylhomocysteine nucleosidase (230 aa).

Residue Glu12 is the Proton acceptor of the active site. Residues Gly78, Ile153, and 174–175 (ME) each bind substrate. Asp198 serves as the catalytic Proton donor.

This sequence belongs to the PNP/UDP phosphorylase family. MtnN subfamily.

It catalyses the reaction S-adenosyl-L-homocysteine + H2O = S-(5-deoxy-D-ribos-5-yl)-L-homocysteine + adenine. The catalysed reaction is S-methyl-5'-thioadenosine + H2O = 5-(methylsulfanyl)-D-ribose + adenine. The enzyme catalyses 5'-deoxyadenosine + H2O = 5-deoxy-D-ribose + adenine. Its pathway is amino-acid biosynthesis; L-methionine biosynthesis via salvage pathway; S-methyl-5-thio-alpha-D-ribose 1-phosphate from S-methyl-5'-thioadenosine (hydrolase route): step 1/2. Functionally, catalyzes the irreversible cleavage of the glycosidic bond in both 5'-methylthioadenosine (MTA) and S-adenosylhomocysteine (SAH/AdoHcy) to adenine and the corresponding thioribose, 5'-methylthioribose and S-ribosylhomocysteine, respectively. Also cleaves 5'-deoxyadenosine, a toxic by-product of radical S-adenosylmethionine (SAM) enzymes, into 5-deoxyribose and adenine. This Shewanella piezotolerans (strain WP3 / JCM 13877) protein is 5'-methylthioadenosine/S-adenosylhomocysteine nucleosidase.